A 266-amino-acid polypeptide reads, in one-letter code: MSIVTPYEDLLRFVLETGTPKSDRTGTGTRSLFGQQMRYDLSAGFPLLTTKKVHFKSVAYELLWFLRGDSNIGWLHEHGVTIWDEWASDTGELGPIYGVQWRSWPAPSGEHIDQISAALDLLRTDPDSRRIIVSAWNVGEIERMALPPCHAFFQFYVADGRLSCQLYQRSADLFLGVPFNIASYALLTHMMAAQAGLSVGEFIWTGGDCHIYDNHVEQVRLQLSREPRPYPKLLLADRDSIFEYTYEDIVVKNYDPHPAIKAPVAV.

Residue arginine 24 participates in dUMP binding. Histidine 54 contributes to the (6R)-5,10-methylene-5,6,7,8-tetrahydrofolate binding site. Position 129–130 (129–130) interacts with dUMP; that stretch reads RR. Cysteine 149 serves as the catalytic Nucleophile. DUMP-binding positions include 169–172, asparagine 180, and 210–212; these read RSAD and HIY. Aspartate 172 is a (6R)-5,10-methylene-5,6,7,8-tetrahydrofolate binding site. Alanine 265 serves as a coordination point for (6R)-5,10-methylene-5,6,7,8-tetrahydrofolate.

The protein belongs to the thymidylate synthase family. Bacterial-type ThyA subfamily. Homodimer.

The protein resides in the cytoplasm. The enzyme catalyses dUMP + (6R)-5,10-methylene-5,6,7,8-tetrahydrofolate = 7,8-dihydrofolate + dTMP. The protein operates within pyrimidine metabolism; dTTP biosynthesis. In terms of biological role, catalyzes the reductive methylation of 2'-deoxyuridine-5'-monophosphate (dUMP) to 2'-deoxythymidine-5'-monophosphate (dTMP) while utilizing 5,10-methylenetetrahydrofolate (mTHF) as the methyl donor and reductant in the reaction, yielding dihydrofolate (DHF) as a by-product. This enzymatic reaction provides an intracellular de novo source of dTMP, an essential precursor for DNA biosynthesis. The protein is Thymidylate synthase of Mycobacterium bovis (strain ATCC BAA-935 / AF2122/97).